A 217-amino-acid chain; its full sequence is LexA repressor (217 aa).

A DNA-binding region (H-T-H motif) is located at residues 28 to 48 (RAEIAAEFGFSSPNAAEEHLR). Active-site for autocatalytic cleavage activity residues include S136 and K173.

It belongs to the peptidase S24 family. Homodimer.

The enzyme catalyses Hydrolysis of Ala-|-Gly bond in repressor LexA.. Functionally, represses a number of genes involved in the response to DNA damage (SOS response), including recA and lexA. In the presence of single-stranded DNA, RecA interacts with LexA causing an autocatalytic cleavage which disrupts the DNA-binding part of LexA, leading to derepression of the SOS regulon and eventually DNA repair. This chain is LexA repressor, found in Cupriavidus necator (strain ATCC 17699 / DSM 428 / KCTC 22496 / NCIMB 10442 / H16 / Stanier 337) (Ralstonia eutropha).